The following is a 657-amino-acid chain: Histidine ammonia-lyase (657 aa).

A cross-link (5-imidazolinone (Ala-Gly)) is located at residues 253-255 (ASG). 2,3-didehydroalanine (Ser) is present on serine 254. Threonine 396 carries the post-translational modification Phosphothreonine. Serine 635 carries the post-translational modification Phosphoserine. At threonine 637 the chain carries Phosphothreonine. The residue at position 648 (serine 648) is a Phosphoserine.

It belongs to the PAL/histidase family. Post-translationally, contains an active site 4-methylidene-imidazol-5-one (MIO), which is formed autocatalytically by cyclization and dehydration of residues Ala-Ser-Gly.

It catalyses the reaction L-histidine = trans-urocanate + NH4(+). Its pathway is amino-acid degradation; L-histidine degradation into L-glutamate; N-formimidoyl-L-glutamate from L-histidine: step 1/3. The sequence is that of Histidine ammonia-lyase (HAL) from Homo sapiens (Human).